The primary structure comprises 277 residues: tRNA pseudouridine synthase A (277 aa).

D51 acts as the Nucleophile in catalysis. Residue Y109 participates in substrate binding.

Belongs to the tRNA pseudouridine synthase TruA family. As to quaternary structure, homodimer.

The enzyme catalyses uridine(38/39/40) in tRNA = pseudouridine(38/39/40) in tRNA. Functionally, formation of pseudouridine at positions 38, 39 and 40 in the anticodon stem and loop of transfer RNAs. The protein is tRNA pseudouridine synthase A of Nitrosomonas eutropha (strain DSM 101675 / C91 / Nm57).